A 463-amino-acid chain; its full sequence is L-seryl-tRNA(Sec) selenium transferase (463 aa).

Lysine 295 bears the N6-(pyridoxal phosphate)lysine mark.

It belongs to the SelA family. As to quaternary structure, homodecamer; pentamer of dimers. Binds only one seryl-tRNA(Sec) per dimer. Pyridoxal 5'-phosphate is required as a cofactor.

The protein localises to the cytoplasm. It catalyses the reaction L-seryl-tRNA(Sec) + selenophosphate + H(+) = L-selenocysteinyl-tRNA(Sec) + phosphate. It functions in the pathway aminoacyl-tRNA biosynthesis; selenocysteinyl-tRNA(Sec) biosynthesis; selenocysteinyl-tRNA(Sec) from L-seryl-tRNA(Sec) (bacterial route): step 1/1. Its function is as follows. Converts seryl-tRNA(Sec) to selenocysteinyl-tRNA(Sec) required for selenoprotein biosynthesis. The chain is L-seryl-tRNA(Sec) selenium transferase from Salmonella schwarzengrund (strain CVM19633).